Reading from the N-terminus, the 357-residue chain is Chaperone protein DnaJ (357 aa).

A J domain is found at 4-69 (DYYAILGVDR…QKRKQYDETG (66 aa)). Residues 132-213 (GASKNVKYRR…CHGTGTVSKN (82 aa)) form a CR-type zinc finger. 8 residues coordinate Zn(2+): Cys145, Cys148, Cys161, Cys164, Cys187, Cys190, Cys201, and Cys204. CXXCXGXG motif repeat units lie at residues 145 to 152 (CEHCSGTG), 161 to 168 (CPTCHGSG), 187 to 194 (CRTCHGRG), and 201 to 208 (CTVCHGTG).

This sequence belongs to the DnaJ family. Homodimer. The cofactor is Zn(2+).

Its subcellular location is the cytoplasm. In terms of biological role, participates actively in the response to hyperosmotic and heat shock by preventing the aggregation of stress-denatured proteins and by disaggregating proteins, also in an autonomous, DnaK-independent fashion. Unfolded proteins bind initially to DnaJ; upon interaction with the DnaJ-bound protein, DnaK hydrolyzes its bound ATP, resulting in the formation of a stable complex. GrpE releases ADP from DnaK; ATP binding to DnaK triggers the release of the substrate protein, thus completing the reaction cycle. Several rounds of ATP-dependent interactions between DnaJ, DnaK and GrpE are required for fully efficient folding. Also involved, together with DnaK and GrpE, in the DNA replication of plasmids through activation of initiation proteins. The polypeptide is Chaperone protein DnaJ (Picrophilus torridus (strain ATCC 700027 / DSM 9790 / JCM 10055 / NBRC 100828 / KAW 2/3)).